Reading from the N-terminus, the 113-residue chain is Carboxysome shell protein CcmK4 (113 aa).

One can recognise a BMC domain in the interval 5–91 (AIGSLETKGF…PHENVEAVFP (87 aa)).

This sequence belongs to the bacterial microcompartments protein family. CcmK subfamily. In terms of assembly, homohexamer. Interacts stably with CcmK3, probably forms heterohexamers with a 1:2 CcmK3:CcmK4 stoichiometry.

Its subcellular location is the carboxysome. One of the shell proteins of the carboxysome, a polyhedral inclusion where RuBisCO (ribulose bisphosphate carboxylase, rbcL-rbcS) is sequestered. Assembles into hexamers which make sheets that form the facets of the polyhedral carboxysome. The hexamer central pore probably regulates metabolite flux. Functionally, a minor shell protein of the carboxysome, a polyhedral inclusion where RuBisCO (ribulose bisphosphate carboxylase, rbcL-rbcS) is sequestered. Hexamers form sheets that form the facets of the polyhedral carboxysome. The shell is 4.5 nm thick, as observed for CcmK proteins. In PCC 7942 there are several CcmK paralogs with presumably functional differences; replacing the central pore residues (34-37) with those of CcmK2 from this organism (Tyr-Glu-Lys-Ile) allows the bacterium to make carboxysomes, but the expression level is too low to know if the carboxysome is functional for CO(2) fixation. This subunit probably makes both homohexamers and heterohexamers with CcmK3. The CcmK3-CcmK4 heterohexmers have been suggested to cap other hexamers, perhaps to alter metabolite flux. The chain is Carboxysome shell protein CcmK4 from Synechococcus elongatus (strain ATCC 33912 / PCC 7942 / FACHB-805) (Anacystis nidulans R2).